The sequence spans 559 residues: Cytoplasmic polyadenylation element-binding protein 1 (559 aa).

The segment at 223-244 (RLDHSSSPLTPPPSATSSGGLS) is disordered. RRM domains lie at 304–401 (CKVF…DAQV) and 423–504 (NTVF…PYLE). Cysteine 508, cysteine 511, cysteine 520, cysteine 525, cysteine 530, cysteine 533, histidine 538, and histidine 546 together coordinate Zn(2+).

Belongs to the RRM CPEB family. Interacts with kinesin, dynein, APLP1, APLP2, TENT2/GLD2 and APP. Both phosphorylated and non phosphorylated forms interact with APLP1. Interacts with TENT4B; the interaction is required for TENT4B-mediated translational control.

It is found in the cytoplasm. Its function is as follows. Sequence-specific RNA-binding protein that regulates mRNA cytoplasmic polyadenylation and translation initiation during oocyte maturation and early development. Binds to the cytoplasmic polyadenylation element (CPE), an uridine-rich sequence element (consensus sequence 5'-UUUUUAU-3') within the mRNA 3'-UTR. This chain is Cytoplasmic polyadenylation element-binding protein 1 (cpeb1), found in Carassius auratus (Goldfish).